The following is a 152-amino-acid chain: Protein Smg homolog (152 aa).

Belongs to the Smg family.

This Chromobacterium violaceum (strain ATCC 12472 / DSM 30191 / JCM 1249 / CCUG 213 / NBRC 12614 / NCIMB 9131 / NCTC 9757 / MK) protein is Protein Smg homolog.